A 356-amino-acid chain; its full sequence is Ferrochelatase (356 aa).

His-214 and Glu-295 together coordinate Fe cation.

This sequence belongs to the ferrochelatase family.

It localises to the cytoplasm. The enzyme catalyses heme b + 2 H(+) = protoporphyrin IX + Fe(2+). It participates in porphyrin-containing compound metabolism; protoheme biosynthesis; protoheme from protoporphyrin-IX: step 1/1. In terms of biological role, catalyzes the ferrous insertion into protoporphyrin IX. This is Ferrochelatase from Paraburkholderia phymatum (strain DSM 17167 / CIP 108236 / LMG 21445 / STM815) (Burkholderia phymatum).